The chain runs to 193 residues: Cyanate hydratase (193 aa).

Active-site residues include R121, E124, and S147.

Belongs to the cyanase family.

It carries out the reaction cyanate + hydrogencarbonate + 3 H(+) = NH4(+) + 2 CO2. Functionally, catalyzes the reaction of cyanate with bicarbonate to produce ammonia and carbon dioxide. The polypeptide is Cyanate hydratase (Phaeodactylum tricornutum (strain CCAP 1055/1)).